The primary structure comprises 226 residues: Cytidylate kinase (226 aa).

12–20 serves as a coordination point for ATP; sequence GPSGAGKGT.

Belongs to the cytidylate kinase family. Type 1 subfamily.

It localises to the cytoplasm. The catalysed reaction is CMP + ATP = CDP + ADP. It carries out the reaction dCMP + ATP = dCDP + ADP. This is Cytidylate kinase from Vibrio vulnificus (strain CMCP6).